The chain runs to 250 residues: 1-(5-phosphoribosyl)-5-[(5-phosphoribosylamino)methylideneamino] imidazole-4-carboxamide isomerase (250 aa).

D8 serves as the catalytic Proton acceptor. Catalysis depends on D129, which acts as the Proton donor.

This sequence belongs to the HisA/HisF family.

It localises to the cytoplasm. The catalysed reaction is 1-(5-phospho-beta-D-ribosyl)-5-[(5-phospho-beta-D-ribosylamino)methylideneamino]imidazole-4-carboxamide = 5-[(5-phospho-1-deoxy-D-ribulos-1-ylimino)methylamino]-1-(5-phospho-beta-D-ribosyl)imidazole-4-carboxamide. It participates in amino-acid biosynthesis; L-histidine biosynthesis; L-histidine from 5-phospho-alpha-D-ribose 1-diphosphate: step 4/9. The sequence is that of 1-(5-phosphoribosyl)-5-[(5-phosphoribosylamino)methylideneamino] imidazole-4-carboxamide isomerase from Desulfatibacillum aliphaticivorans.